Reading from the N-terminus, the 434-residue chain is MAKTDIARRVYNHAWKLDPIIRSLIDTDFYKLLMLQMIWKLYPDVNASFTLINRTKRVHLAEEIDEGELREQLDHARTLRLSKKEMIWLAGNSFYGRAQIFEPEFLAWLSNFQLPEYELSKKDGQYVLDFHGAWKETTMWEIPALAIVNELRSRSAMKALGPFTLDVLYARAKAKMWSKVERLRELPGLRISDFGTRRRHSFLWQRWCVEALKEGIGPAFTGTSNVLLAMDSDLEAVGTNAHELPMVAAALAQTDEQLRNAPYKILRDWNKLYGGNLLIVLPDAFGTAAFLRDAPEWVADWTGFRPDSAPPIEGGEKIIDWWKKMGRDPRQKLLIFSDGLDVDAIIDTYRHFEGRVRMSFGWGTNLTNDFAGCAPTEISGLNPISVVCKVSDANGRPAVKLSDNPQKATGEPAEVERYLKFFGTEDRVDQTVLV.

His-242 is subject to Phosphohistidine; by autocatalysis.

This sequence belongs to the NAPRTase family. In terms of processing, transiently phosphorylated on a His residue during the reaction cycle. Phosphorylation strongly increases the affinity for substrates and increases the rate of nicotinate D-ribonucleotide production. Dephosphorylation regenerates the low-affinity form of the enzyme, leading to product release.

The catalysed reaction is nicotinate + 5-phospho-alpha-D-ribose 1-diphosphate + ATP + H2O = nicotinate beta-D-ribonucleotide + ADP + phosphate + diphosphate. It functions in the pathway cofactor biosynthesis; NAD(+) biosynthesis; nicotinate D-ribonucleotide from nicotinate: step 1/1. Catalyzes the synthesis of beta-nicotinate D-ribonucleotide from nicotinate and 5-phospho-D-ribose 1-phosphate at the expense of ATP. In Rhizobium etli (strain CIAT 652), this protein is Nicotinate phosphoribosyltransferase.